Here is a 179-residue protein sequence, read N- to C-terminus: Interferon lambda-4 (179 aa).

The N-terminal stretch at 1-21 is a signal peptide; that stretch reads MRPSVWAAVAAGLWVLCTVIA. Residues 130–149 form a disordered region; sequence SSRKVPGAQKRRHKPRRADS.

Belongs to the lambda interferon family.

The protein resides in the cytoplasm. It is found in the secreted. Its function is as follows. Cytokine that may trigger an antiviral response activating the JAK-STAT pathway and up-regulating specifically some interferon-stimulated genes. The polypeptide is Interferon lambda-4 (IFNL4) (Homo sapiens (Human)).